The following is a 478-amino-acid chain: Glycogen synthase (478 aa).

Residue K16 coordinates ADP-alpha-D-glucose.

This sequence belongs to the glycosyltransferase 1 family. Bacterial/plant glycogen synthase subfamily.

It carries out the reaction [(1-&gt;4)-alpha-D-glucosyl](n) + ADP-alpha-D-glucose = [(1-&gt;4)-alpha-D-glucosyl](n+1) + ADP + H(+). It functions in the pathway glycan biosynthesis; glycogen biosynthesis. In terms of biological role, synthesizes alpha-1,4-glucan chains using ADP-glucose. The sequence is that of Glycogen synthase from Lachnoclostridium phytofermentans (strain ATCC 700394 / DSM 18823 / ISDg) (Clostridium phytofermentans).